Reading from the N-terminus, the 480-residue chain is Glutamate--tRNA ligase (480 aa).

Positions P21–G31 match the 'HIGH' region motif. Basic and acidic residues predominate over residues N122 to E146. The segment at N122 to H149 is disordered. The 'KMSKS' region signature appears at K248–R252. K251 contacts ATP.

Belongs to the class-I aminoacyl-tRNA synthetase family. Glutamate--tRNA ligase type 1 subfamily. As to quaternary structure, monomer.

The protein localises to the cytoplasm. It carries out the reaction tRNA(Glu) + L-glutamate + ATP = L-glutamyl-tRNA(Glu) + AMP + diphosphate. Its function is as follows. Catalyzes the attachment of glutamate to tRNA(Glu) in a two-step reaction: glutamate is first activated by ATP to form Glu-AMP and then transferred to the acceptor end of tRNA(Glu). In Pasteurella multocida (strain Pm70), this protein is Glutamate--tRNA ligase.